We begin with the raw amino-acid sequence, 406 residues long: GTPase Obg (406 aa).

Residues 1–159 (MRFVDEAVIT…REIRLELKVL (159 aa)) form the Obg domain. A disordered region spans residues 120 to 143 (GGEGGLGNTHFKSSTNRAPRKCTT). An OBG-type G domain is found at 160-333 (ADVGLLGMPN…VVYYLMDQIE (174 aa)). Residues 166-173 (GMPNAGKS), 191-195 (FTTMV), 213-216 (DIPG), 283-286 (NKLD), and 314-316 (SGL) each bind GTP. The Mg(2+) site is built by serine 173 and threonine 193. A disordered region spans residues 381–406 (ESMMDDDDDFDDDEDDGDVESIYVRD). The segment covering 383-399 (MMDDDDDFDDDEDDGDV) has biased composition (acidic residues).

It belongs to the TRAFAC class OBG-HflX-like GTPase superfamily. OBG GTPase family. In terms of assembly, monomer. Requires Mg(2+) as cofactor.

Its subcellular location is the cytoplasm. In terms of biological role, an essential GTPase which binds GTP, GDP and possibly (p)ppGpp with moderate affinity, with high nucleotide exchange rates and a fairly low GTP hydrolysis rate. Plays a role in control of the cell cycle, stress response, ribosome biogenesis and in those bacteria that undergo differentiation, in morphogenesis control. This chain is GTPase Obg, found in Acinetobacter baumannii (strain SDF).